The chain runs to 108 residues: UPF0060 membrane protein amb3269 (108 aa).

A run of 4 helical transmembrane segments spans residues I4–W24, P31–I51, A59–E79, and R85–P105.

The protein belongs to the UPF0060 family.

The protein resides in the cell inner membrane. The protein is UPF0060 membrane protein amb3269 of Paramagnetospirillum magneticum (strain ATCC 700264 / AMB-1) (Magnetospirillum magneticum).